The following is a 500-amino-acid chain: Protein nucleotidyltransferase YdiU (500 aa).

G96, G98, R99, K119, D131, G132, R182, and R189 together coordinate ATP. D258 serves as the catalytic Proton acceptor. Residues N259 and D268 each coordinate Mg(2+). ATP is bound at residue D268.

This sequence belongs to the SELO family. It depends on Mg(2+) as a cofactor. The cofactor is Mn(2+).

It catalyses the reaction L-seryl-[protein] + ATP = 3-O-(5'-adenylyl)-L-seryl-[protein] + diphosphate. It carries out the reaction L-threonyl-[protein] + ATP = 3-O-(5'-adenylyl)-L-threonyl-[protein] + diphosphate. The catalysed reaction is L-tyrosyl-[protein] + ATP = O-(5'-adenylyl)-L-tyrosyl-[protein] + diphosphate. The enzyme catalyses L-histidyl-[protein] + UTP = N(tele)-(5'-uridylyl)-L-histidyl-[protein] + diphosphate. It catalyses the reaction L-seryl-[protein] + UTP = O-(5'-uridylyl)-L-seryl-[protein] + diphosphate. It carries out the reaction L-tyrosyl-[protein] + UTP = O-(5'-uridylyl)-L-tyrosyl-[protein] + diphosphate. Functionally, nucleotidyltransferase involved in the post-translational modification of proteins. It can catalyze the addition of adenosine monophosphate (AMP) or uridine monophosphate (UMP) to a protein, resulting in modifications known as AMPylation and UMPylation. This is Protein nucleotidyltransferase YdiU from Rhizobium johnstonii (strain DSM 114642 / LMG 32736 / 3841) (Rhizobium leguminosarum bv. viciae).